Consider the following 1058-residue polypeptide: Carbamoyl phosphate synthase large chain (1058 aa).

Residues 1-401 (MPKRTDIQKI…SLLKACRSLE (401 aa)) form a carboxyphosphate synthetic domain region. Positions 129, 169, 175, 176, 208, 210, 215, 241, 242, 243, 284, and 298 each coordinate ATP. The ATP-grasp 1 domain occupies 133–327 (KQLMEELEQP…IAKLAAKIAV (195 aa)). Residues Q284, E298, and N300 each coordinate Mg(2+). Residues Q284, E298, and N300 each coordinate Mn(2+). The interval 402–546 (IGVHHNEIPE…YSTYGWENES (145 aa)) is oligomerization domain. The segment at 547-929 (IRSDKESVLV…ALYKAFEASY (383 aa)) is carbamoyl phosphate synthetic domain. The ATP-grasp 2 domain maps to 671–861 (EQALKELDIP…MAQVATKLIL (191 aa)). 10 residues coordinate ATP: R707, S746, I748, E752, G777, V778, H779, S780, Q820, and E832. Residues Q820, E832, and N834 each coordinate Mg(2+). 3 residues coordinate Mn(2+): Q820, E832, and N834. The 129-residue stretch at 930 to 1058 (LHLPTFGNVV…ESRSFVTEAI (129 aa)) folds into the MGS-like domain. Residues 930–1058 (LHLPTFGNVV…ESRSFVTEAI (129 aa)) form an allosteric domain region.

The protein belongs to the CarB family. In terms of assembly, composed of two chains; the small (or glutamine) chain promotes the hydrolysis of glutamine to ammonia, which is used by the large (or ammonia) chain to synthesize carbamoyl phosphate. Tetramer of heterodimers (alpha,beta)4. Requires Mg(2+) as cofactor. Mn(2+) is required as a cofactor.

It catalyses the reaction hydrogencarbonate + L-glutamine + 2 ATP + H2O = carbamoyl phosphate + L-glutamate + 2 ADP + phosphate + 2 H(+). The enzyme catalyses hydrogencarbonate + NH4(+) + 2 ATP = carbamoyl phosphate + 2 ADP + phosphate + 2 H(+). It participates in amino-acid biosynthesis; L-arginine biosynthesis; carbamoyl phosphate from bicarbonate: step 1/1. The protein operates within pyrimidine metabolism; UMP biosynthesis via de novo pathway; (S)-dihydroorotate from bicarbonate: step 1/3. Its function is as follows. Large subunit of the glutamine-dependent carbamoyl phosphate synthetase (CPSase). CPSase catalyzes the formation of carbamoyl phosphate from the ammonia moiety of glutamine, carbonate, and phosphate donated by ATP, constituting the first step of 2 biosynthetic pathways, one leading to arginine and/or urea and the other to pyrimidine nucleotides. The large subunit (synthetase) binds the substrates ammonia (free or transferred from glutamine from the small subunit), hydrogencarbonate and ATP and carries out an ATP-coupled ligase reaction, activating hydrogencarbonate by forming carboxy phosphate which reacts with ammonia to form carbamoyl phosphate. This is Carbamoyl phosphate synthase large chain from Streptococcus pneumoniae (strain Hungary19A-6).